A 190-amino-acid polypeptide reads, in one-letter code: Inosine triphosphate pyrophosphatase (190 aa).

10–15 (TGNAKK) is a binding site for ITP. A Mg(2+)-binding site is contributed by E40. ITP-binding positions include K52, 68 to 69 (DT), K85, 144 to 147 (FGWD), K167, and 172 to 173 (HR).

This sequence belongs to the HAM1 NTPase family. Homodimer. Mg(2+) serves as cofactor. Requires Mn(2+) as cofactor.

It is found in the cytoplasm. The catalysed reaction is ITP + H2O = IMP + diphosphate + H(+). It catalyses the reaction dITP + H2O = dIMP + diphosphate + H(+). The enzyme catalyses XTP + H2O = XMP + diphosphate + H(+). In terms of biological role, pyrophosphatase that hydrolyzes non-canonical purine nucleotides such as inosine triphosphate (ITP), deoxyinosine triphosphate (dITP) or xanthosine 5'-triphosphate (XTP) to their respective monophosphate derivatives. The enzyme does not distinguish between the deoxy- and ribose forms. Probably excludes non-canonical purines from RNA and DNA precursor pools, thus preventing their incorporation into RNA and DNA and avoiding chromosomal lesions. The polypeptide is Inosine triphosphate pyrophosphatase (Culex quinquefasciatus (Southern house mosquito)).